A 122-amino-acid chain; its full sequence is ATP-dependent Clp protease adapter protein ClpS (122 aa).

A disordered region spans residues 1–33 (MHAPSQIRLTFNQDHPEPHEHEDEGAGLAVQES). A compositionally biased stretch (basic and acidic residues) spans 14-24 (DHPEPHEHEDE).

It belongs to the ClpS family. In terms of assembly, binds to the N-terminal domain of the chaperone ClpA.

Involved in the modulation of the specificity of the ClpAP-mediated ATP-dependent protein degradation. The protein is ATP-dependent Clp protease adapter protein ClpS of Pseudomonas aeruginosa (strain ATCC 15692 / DSM 22644 / CIP 104116 / JCM 14847 / LMG 12228 / 1C / PRS 101 / PAO1).